We begin with the raw amino-acid sequence, 263 residues long: GTP cyclohydrolase 1 type 2 homolog (263 aa).

The a divalent metal cation site is built by His-65, His-66, Asp-104, His-225, and Glu-229.

It belongs to the GTP cyclohydrolase I type 2/NIF3 family. In terms of assembly, homohexamer.

This is GTP cyclohydrolase 1 type 2 homolog from Nostoc sp. (strain PCC 7120 / SAG 25.82 / UTEX 2576).